Reading from the N-terminus, the 746-residue chain is MGQTGKKSEKGPVCWRKRVKSEYMRLRQLKRFRRADEVKTMFSSNRQKILERTETLNQEWKQRRIQPVHIMTSVSSLRGTRECSVTSDLDFPAQVIPLKTLNAVASVPIMYSWSPLQQNFMVEDETVLHNIPYMGDEVLDQDGTFIEELIKNYDGKVHGDRECGFINDEIFVELVNALGQYNDDDDDDDGDDPDEREEKQKDLEDNRDDKETCPPRKFPADKIFEAISSMFPDKGTAEELKEKYKELTEQQLPGALPPECTPNIDGPNAKSVQREQSLHSFHTLFCRRCFKYDCFLHPFHATPNTYKRKNTETALDNKPCGPQCYQHLEGAKEFAAALTAERIKTPPKRPGGRRRGRLPNNSSRPSTPTISVLESKDTDSDREAGTETGGENNDKEEEEKKDETSSSSEANSRCQTPIKMKPNIEPPENVEWSGAEASMFRVLIGTYYDNFCAIARLIGTKTCRQVYEFRVKESSIIAPVPTEDVDTPPRKKKRKHRLWAAHCRKIQLKKDGSSNHVYNYQPCDHPRQPCDSSCPCVIAQNFCEKFCQCSSECQNRFPGCRCKAQCNTKQCPCYLAVRECDPDLCLTCGAADHWDSKNVSCKNCSIQRGSKKHLLLAPSDVAGWGIFIKDPVQKNEFISEYCGEIISQDEADRRGKVYDKYMCSFLFNLNNDFVVDATRKGNKIRFANHSVNPNCYAKVMMVNGDHRIGIFAKRAIQTGEELFFDYRYSQADALKYVGIEREMEIP.

An interaction with DNMT1, DNMT3A and DNMT3B region spans residues 1–340; the sequence is MGQTGKKSEK…AKEFAAALTA (340 aa). Position 21 is a phosphoserine; by PKB/AKT1 (S21). Residues 39–68 form an interaction with EED region; sequence KTMFSSNRQKILERTETLNQEWKQRRIQPV. An O-linked (GlcNAc) serine glycan is attached at S75. The residue at position 76 (S76) is a Phosphoserine. The tract at residues 180–217 is disordered; sequence QYNDDDDDDDGDDPDEREEKQKDLEDNRDDKETCPPRK. Over residues 182 to 195 the composition is skewed to acidic residues; the sequence is NDDDDDDDGDDPDE. The segment covering 196-217 has biased composition (basic and acidic residues); sequence REEKQKDLEDNRDDKETCPPRK. Positions 329 to 522 are interaction with CDYL; that stretch reads EGAKEFAAAL…SSNHVYNYQP (194 aa). Phosphothreonine is present on T339. The tract at residues 340-426 is disordered; the sequence is AERIKTPPKR…PIKMKPNIEP (87 aa). T345 is modified (phosphothreonine; by CDK1 and CDK2). Over residues 345–357 the composition is skewed to basic residues; it reads TPPKRPGGRRRGR. Phosphoserine is present on residues S363 and S366. A Phosphothreonine modification is found at T367. Over residues 374–385 the composition is skewed to basic and acidic residues; that stretch reads ESKDTDSDREAG. Position 487 is a phosphothreonine (T487). The 103-residue stretch at 503–605 folds into the CXC domain; sequence CRKIQLKKDG…SKNVSCKNCS (103 aa). Residues 612-727 form the SET domain; that stretch reads KHLLLAPSDV…TGEELFFDYR (116 aa). A Glycyl lysine isopeptide (Lys-Gly) (interchain with G-Cter in SUMO2) cross-link involves residue K634.

It belongs to the class V-like SAM-binding methyltransferase superfamily. Histone-lysine methyltransferase family. EZ subfamily. As to quaternary structure, component of the PRC2/EED-EZH2 complex, which includes EED, EZH2, SUZ12, RBBP4 and RBBP7 and possibly AEBP2. The minimum components required for methyltransferase activity of the PRC2/EED-EZH2 complex are EED, EZH2 and SUZ12. The PRC2 complex may also interact with DNMT1, DNMT3A, DNMT3B and PHF1 via the EZH2 subunit and with SIRT1 via the SUZ12 subunit. Interacts with HDAC1 and HDAC2. Binds ATRX via the SET domain. Interacts with PRAME. Interacts with CDYL. Interacts with EED. Interacts with BMAL1. Interacts with CLOCK and CRY1. Interacts with DNMT3L; the interaction is direct. Interacts with EZHIP; the interaction blocks EZH2 methyltransferase activity. Interacts with ZNF263; recruited to the SIX3 promoter along with other proteins involved in chromatin modification and transcriptional corepression where it contributes to transcriptional repression. Interacts with ARMC12. Interacts with ZMYND8; the interaction is dependent on the presence of chromatin. Interacts with DDX18; this interaction inhibits the PRC2 complex. Post-translationally, phosphorylated by AKT1. Phosphorylation by AKT1 reduces methyltransferase activity. Phosphorylation at Thr-345 by CDK1 and CDK2 promotes maintenance of H3K27me3 levels at EZH2-target loci, thus leading to epigenetic gene silencing. In terms of processing, sumoylated. Glycosylated: O-GlcNAcylation at Ser-75 by OGT increases stability of EZH2 and facilitates the formation of H3K27me3 by the PRC2/EED-EZH2 complex. As to expression, present in actively dividing cells. Widely expressed in early embryos. In later embryogenesis, expression restricted to central and peripheral nervous system, liver and thymus. In adult, highest expression in spleen, testis and placenta. Lower levels in intestine, muscle and ovary and very low levels in brain and liver. No expression in heart, thyroid gland, lung and kidney.

The protein localises to the nucleus. It localises to the chromosome. It catalyses the reaction L-lysyl(27)-[histone H3] + 3 S-adenosyl-L-methionine = N(6),N(6),N(6)-trimethyl-L-lysyl(27)-[histone H3] + 3 S-adenosyl-L-homocysteine + 3 H(+). Polycomb group (PcG) protein. Catalytic subunit of the PRC2/EED-EZH2 complex, which methylates (H3K9me) and 'Lys-27' (H3K27me) of histone H3, leading to transcriptional repression of the affected target gene. Able to mono-, di- and trimethylate 'Lys-27' of histone H3 to form H3K27me1, H3K27me2 and H3K27me3, respectively. Displays a preference for substrates with less methylation, loses activity when progressively more methyl groups are incorporated into H3K27, H3K27me0 &gt; H3K27me1 &gt; H3K27me2. Compared to EZH1-containing complexes, it is more abundant in embryonic stem cells and plays a major role in forming H3K27me3, which is required for embryonic stem cell identity and proper differentiation. The PRC2/EED-EZH2 complex may also serve as a recruiting platform for DNA methyltransferases, thereby linking two epigenetic repression systems. Genes repressed by the PRC2/EED-EZH2 complex include HOXA7, HOXB6 and HOXC8. EZH2 can also methylate non-histone proteins such as the transcription factor GATA4 and the nuclear receptor RORA. Regulates the circadian clock via histone methylation at the promoter of the circadian genes. Essential for the CRY1/2-mediated repression of the transcriptional activation of PER1/2 by the CLOCK-BMAL1 heterodimer; involved in the di and trimethylation of 'Lys-27' of histone H3 on PER1/2 promoters which is necessary for the CRY1/2 proteins to inhibit transcription. The protein is Histone-lysine N-methyltransferase EZH2 of Mus musculus (Mouse).